The primary structure comprises 191 residues: Signal peptidase IB (191 aa).

Residues 1-7 (MKKELLE) lie on the Cytoplasmic side of the membrane. Residues 8 to 28 (WIISIAVAFVILFIVGKFIVT) form a helical membrane-spanning segment. Topologically, residues 29 to 191 (PYTIKGESMD…HNFNPENTKN (163 aa)) are extracellular. Residues serine 36 and lysine 77 contribute to the active site.

It belongs to the peptidase S26 family.

The protein resides in the cell membrane. It carries out the reaction Cleavage of hydrophobic, N-terminal signal or leader sequences from secreted and periplasmic proteins.. In terms of biological role, essential for cell viability. This Staphylococcus aureus (strain Mu50 / ATCC 700699) protein is Signal peptidase IB (spsB).